A 291-amino-acid polypeptide reads, in one-letter code: MEMO1 family protein PH1626 (291 aa).

It belongs to the MEMO1 family.

This chain is MEMO1 family protein PH1626, found in Pyrococcus horikoshii (strain ATCC 700860 / DSM 12428 / JCM 9974 / NBRC 100139 / OT-3).